The primary structure comprises 446 residues: Phosphoglucosamine mutase (446 aa).

S102 acts as the Phosphoserine intermediate in catalysis. Residues S102, D241, D243, and D245 each contribute to the Mg(2+) site. S102 carries the phosphoserine modification.

This sequence belongs to the phosphohexose mutase family. The cofactor is Mg(2+). Post-translationally, activated by phosphorylation.

The enzyme catalyses alpha-D-glucosamine 1-phosphate = D-glucosamine 6-phosphate. Catalyzes the conversion of glucosamine-6-phosphate to glucosamine-1-phosphate. This chain is Phosphoglucosamine mutase, found in Yersinia pseudotuberculosis serotype O:1b (strain IP 31758).